Consider the following 306-residue polypeptide: MAKHVAVLMGGWSSEREVSLRSGAACAGALEAAGYRVTRVDVGRDVAEVLTHLKPDVAFNVLHGQPGEDGTIQGILEILRIPYSHSGVLASALAMDKAQARIMLAAAGVPVAKGGLVSRAEAAKAHIMPTPYVLKPNAGGSSVGVFIVREDQAHPPQELTREDWPHGENLLAEEFIPGLELTCAVMGDKVLDVIEIESTQKFYDYESKYAPGGSQHILPARILPEIYQRVQMLSLTAHRALGCRGVSRSDFRFDPSRGDGSGLICLEVNTQPGMTETSLVPELAAHAGISFGELVTWMVEDASLER.

The ATP-grasp domain maps to R101–E300. M128 to T182 contributes to the ATP binding site. Residues D250, E267, and N269 each coordinate Mg(2+).

This sequence belongs to the D-alanine--D-alanine ligase family. It depends on Mg(2+) as a cofactor. The cofactor is Mn(2+).

It localises to the cytoplasm. It catalyses the reaction 2 D-alanine + ATP = D-alanyl-D-alanine + ADP + phosphate + H(+). Its pathway is cell wall biogenesis; peptidoglycan biosynthesis. Functionally, cell wall formation. The chain is D-alanine--D-alanine ligase from Xanthobacter autotrophicus (strain ATCC BAA-1158 / Py2).